A 340-amino-acid polypeptide reads, in one-letter code: uncharacterized protein (340 aa).

An RING-CH-type zinc finger spans residues Lys-6–Ala-70. 8 residues coordinate Zn(2+): Cys-14, Cys-17, Cys-37, Cys-39, His-44, Cys-47, Cys-60, and Cys-63. 3 consecutive transmembrane segments (helical) span residues Glu-249 to Leu-269, Pro-274 to Thr-294, and Ile-300 to Trp-320.

The protein resides in the membrane. This is an uncharacterized protein from Schizosaccharomyces pombe (strain 972 / ATCC 24843) (Fission yeast).